We begin with the raw amino-acid sequence, 246 residues long: NAD-dependent protein deacetylase (246 aa).

The Deacetylase sirtuin-type domain maps to 1–246 (MKMKEFLDLL…RRVMEEGGIS (246 aa)). A22, T26, F33, R34, Q98, I100, D101, and H116 together coordinate NAD(+). F33 is a nicotinamide binding site. Nicotinamide-binding residues include I100 and D101. The active-site Proton acceptor is the H116. Zn(2+)-binding residues include C124, C127, C148, and C151. Positions 189, 190, 214, 215, 216, 231, and 232 each coordinate NAD(+).

This sequence belongs to the sirtuin family. Class U subfamily. Zn(2+) is required as a cofactor.

Its subcellular location is the cytoplasm. The catalysed reaction is N(6)-acetyl-L-lysyl-[protein] + NAD(+) + H2O = 2''-O-acetyl-ADP-D-ribose + nicotinamide + L-lysyl-[protein]. Non-competitively inhibited by nicotinamide in vitro and in vivo, but not by nicotinic acid. Nicotinamide inhibits the deacetylation activity by reacting with a reaction intermediate. In terms of biological role, NAD-dependent protein deacetylase which modulates the activities of several enzymes which are inactive in their acetylated form. Also has depropionylation activity in vitro. Also able to ADP-ribosylate peptide substrates with Arg or Lys in the +2 position. The role of this function in vivo is not clear. In Thermotoga maritima (strain ATCC 43589 / DSM 3109 / JCM 10099 / NBRC 100826 / MSB8), this protein is NAD-dependent protein deacetylase.